The following is a 631-amino-acid chain: MGVLSRVDTPEDVRRLNVAELRELAEEIREFLVRKVAATGGHLGPNLGVVELTIALHRVFDSPADPLIFDTGHQAYVHKILTGRKDRFDDLRKQGGLSGYPSRAESPHDWVESSHASAALSYADGLAKAFALGGQDRHVVAVVGDGALTGGMCWEALNNIAAAPDRPVVVVVNDNGRSYAPTIGGLADRLTALRTQPAYEHALDAGKRLLKSIPRVGESAYSMVHAVKAGIKDAVSPQELFSDLGLKYVGPVDGHDVVAMESALRRAKDFGGPVVVHAVTQKGRGYEHAENHVADQMHACDPIDPLTGRPLGGAKARGWTSVFSEELIEHARRRSDIVAITAAMPGPTGLSAFGERFPDRMFDVGIAEQHAMASAAGLALGGMHPVVAIYSTFLNRAFDQLLMDVALLKQPVTVVLDRAGITGPDGASHNGMWDLSLLGIIPGIRVAAPRDAATLREELGEALAVTDGPTVLRFPKGSVAEDLTAVERIDGVDVLRAADPESAVRTQRGDVLIVAVGPFARIGLAAAELLAPEGVSVTVVDPRWVLPVSDTVVKLAENYRLVVTLEDSGLHGGIGSTVSARLRSVGLDVPTRDLGVPQQFLDHASRDQVLEQLGLTPTDVARRIAGWLDAR.

Thiamine diphosphate-binding positions include histidine 73 and 114–116 (SHA). Aspartate 145 contributes to the Mg(2+) binding site. Residues 146–147 (GA), asparagine 175, tyrosine 286, and glutamate 368 each bind thiamine diphosphate. Asparagine 175 provides a ligand contact to Mg(2+).

Belongs to the transketolase family. DXPS subfamily. As to quaternary structure, homodimer. It depends on Mg(2+) as a cofactor. Thiamine diphosphate serves as cofactor.

It catalyses the reaction D-glyceraldehyde 3-phosphate + pyruvate + H(+) = 1-deoxy-D-xylulose 5-phosphate + CO2. It participates in metabolic intermediate biosynthesis; 1-deoxy-D-xylulose 5-phosphate biosynthesis; 1-deoxy-D-xylulose 5-phosphate from D-glyceraldehyde 3-phosphate and pyruvate: step 1/1. Its function is as follows. Catalyzes the acyloin condensation reaction between C atoms 2 and 3 of pyruvate and glyceraldehyde 3-phosphate to yield 1-deoxy-D-xylulose-5-phosphate (DXP). In Nocardia farcinica (strain IFM 10152), this protein is 1-deoxy-D-xylulose-5-phosphate synthase.